The primary structure comprises 482 residues: tRNA sulfurtransferase (482 aa).

In terms of domain architecture, THUMP spans 61–165 (DQILAILMQT…YDHLHQVLHR (105 aa)). ATP is bound by residues 183 to 184 (LI), K265, G287, and Q296. A disulfide bridge connects residues C344 and C456. A Rhodanese domain is found at 404 to 482 (IGDGAIVLDI…GYGNIKVYRP (79 aa)). The Cysteine persulfide intermediate role is filled by C456.

The protein belongs to the ThiI family.

It is found in the cytoplasm. It catalyses the reaction [ThiI sulfur-carrier protein]-S-sulfanyl-L-cysteine + a uridine in tRNA + 2 reduced [2Fe-2S]-[ferredoxin] + ATP + H(+) = [ThiI sulfur-carrier protein]-L-cysteine + a 4-thiouridine in tRNA + 2 oxidized [2Fe-2S]-[ferredoxin] + AMP + diphosphate. The enzyme catalyses [ThiS sulfur-carrier protein]-C-terminal Gly-Gly-AMP + S-sulfanyl-L-cysteinyl-[cysteine desulfurase] + AH2 = [ThiS sulfur-carrier protein]-C-terminal-Gly-aminoethanethioate + L-cysteinyl-[cysteine desulfurase] + A + AMP + 2 H(+). Its pathway is cofactor biosynthesis; thiamine diphosphate biosynthesis. Catalyzes the ATP-dependent transfer of a sulfur to tRNA to produce 4-thiouridine in position 8 of tRNAs, which functions as a near-UV photosensor. Also catalyzes the transfer of sulfur to the sulfur carrier protein ThiS, forming ThiS-thiocarboxylate. This is a step in the synthesis of thiazole, in the thiamine biosynthesis pathway. The sulfur is donated as persulfide by IscS. In Photobacterium profundum (strain SS9), this protein is tRNA sulfurtransferase.